The primary structure comprises 416 residues: Serine hydroxymethyltransferase (416 aa).

(6S)-5,6,7,8-tetrahydrofolate is bound by residues Leu-117 and 121 to 123; that span reads GHL. The residue at position 226 (Lys-226) is an N6-(pyridoxal phosphate)lysine.

Belongs to the SHMT family. Homodimer. The cofactor is pyridoxal 5'-phosphate.

The protein resides in the cytoplasm. The catalysed reaction is (6R)-5,10-methylene-5,6,7,8-tetrahydrofolate + glycine + H2O = (6S)-5,6,7,8-tetrahydrofolate + L-serine. The protein operates within one-carbon metabolism; tetrahydrofolate interconversion. It functions in the pathway amino-acid biosynthesis; glycine biosynthesis; glycine from L-serine: step 1/1. Catalyzes the reversible interconversion of serine and glycine with tetrahydrofolate (THF) serving as the one-carbon carrier. This reaction serves as the major source of one-carbon groups required for the biosynthesis of purines, thymidylate, methionine, and other important biomolecules. Also exhibits THF-independent aldolase activity toward beta-hydroxyamino acids, producing glycine and aldehydes, via a retro-aldol mechanism. This is Serine hydroxymethyltransferase from Leptospira biflexa serovar Patoc (strain Patoc 1 / Ames).